We begin with the raw amino-acid sequence, 681 residues long: Methionine--tRNA ligase (681 aa).

Residues 12–22 (PYANGSIHLGH) carry the 'HIGH' region motif. Residues Cys-143, Cys-146, Cys-156, and Cys-159 each contribute to the Zn(2+) site. Residues 327 to 331 (KMSKS) carry the 'KMSKS' region motif. An ATP-binding site is contributed by Lys-330. Over residues 545–557 (FEKSNPEKAKQDP) the composition is skewed to basic and acidic residues. The tract at residues 545 to 566 (FEKSNPEKAKQDPSKSNTNEVK) is disordered. The tRNA-binding domain maps to 580–681 (ELSKVELRVG…RDASPGDLLK (102 aa)).

This sequence belongs to the class-I aminoacyl-tRNA synthetase family. MetG type 1 subfamily. Homodimer. Requires Zn(2+) as cofactor.

Its subcellular location is the cytoplasm. The catalysed reaction is tRNA(Met) + L-methionine + ATP = L-methionyl-tRNA(Met) + AMP + diphosphate. Is required not only for elongation of protein synthesis but also for the initiation of all mRNA translation through initiator tRNA(fMet) aminoacylation. In Leptospira biflexa serovar Patoc (strain Patoc 1 / ATCC 23582 / Paris), this protein is Methionine--tRNA ligase.